Here is a 1589-residue protein sequence, read N- to C-terminus: Centrosomal protein of 170 kDa protein B (1589 aa).

Residues Ile-23–Ile-73 enclose the FHA domain. Disordered regions lie at residues Arg-130 to Pro-261, Ile-287 to Ser-309, Leu-325 to Arg-388, and Phe-409 to Glu-583. 2 stretches are compositionally biased toward basic and acidic residues: residues Arg-147–Gly-156 and Pro-243–Glu-253. The segment covering Gly-330–Val-344 has biased composition (basic and acidic residues). Ser-360 and Ser-421 each carry phosphoserine. Basic and acidic residues-rich tracts occupy residues Pro-430–Pro-446 and Leu-467–Leu-476. Residues Ser-478–Pro-489 are compositionally biased toward low complexity. Residues Ser-480 and Ser-492 each carry the phosphoserine modification. A compositionally biased stretch (pro residues) spans Glu-520–Leu-530. Ser-536 carries the phosphoserine modification. Positions Val-538–Thr-548 are enriched in pro residues. Position 542 is a phosphothreonine (Thr-542). Phosphoserine occurs at positions 597, 619, 655, 711, 721, 746, 748, 751, 753, 772, 829, 853, 954, 972, 986, and 988. Disordered stretches follow at residues Pro-598–Leu-895, Asp-934–Phe-1316, Asp-1350–Ser-1374, and Ala-1532–Ala-1552. Residues Ser-711–Gly-722 show a composition bias toward low complexity. Residues Asp-957–Ser-972 show a composition bias toward polar residues. Positions Ser-1029 to Arg-1038 are enriched in basic residues. Phosphoserine is present on residues Ser-1135, Ser-1179, and Ser-1199. Over residues Ala-1221 to Pro-1230 the composition is skewed to polar residues. Over residues Pro-1286–Pro-1301 the composition is skewed to low complexity. Thr-1304 carries the phosphothreonine modification. Phosphoserine occurs at positions 1356 and 1362. Positions Ala-1363 to Ser-1374 are enriched in polar residues. Positions Ala-1542 to Ala-1552 are enriched in low complexity. Residues Ser-1545 and Ser-1548 each carry the phosphoserine modification.

Belongs to the CEP170 family.

Its subcellular location is the cytoplasm. The protein resides in the cytoskeleton. Plays a role in microtubule organization. The protein is Centrosomal protein of 170 kDa protein B (CEP170B) of Homo sapiens (Human).